The following is a 554-amino-acid chain: Protein NODULATION SIGNALING PATHWAY 1 (554 aa).

The interval 76–165 is disordered; it reads TTSTTSLEPN…NSNNGNNKDG (90 aa). Positions 82-91 are enriched in polar residues; that stretch reads LEPNSFNNIP. Over residues 95-107 the composition is skewed to basic and acidic residues; sequence LPKKRNAEDELSL. Residues 150 to 162 show a composition bias toward low complexity; that stretch reads AKANGSNSNNGNN. A GRAS domain is found at 159–548; it reads NGNNKDGRWA…QPVSFCSLWK (390 aa). Positions 166–227 are leucine repeat I (LRI); that stretch reads RWAEQLLNPC…HHLSSSSSST (62 aa). The interval 246-315 is VHIID; the sequence is LLKFYEFSPW…GGPPPLVRLT (70 aa). Positions 281–285 match the VHIID motif; that stretch reads LHILD. The segment at 331 to 373 is leucine repeat II (LRII); that stretch reads TPFSIGPCGDTFSSGLLGYAQSLNVNLQIKKLDNHPLQTLNAK. The segment at 383 to 468 is PFYRE; sequence LIVCAQFRLH…RDSDERKMME (86 aa). Residues 471–548 are SAW; it reads AAKALTNQRE…QPVSFCSLWK (78 aa).

The protein belongs to the GRAS family. In terms of tissue distribution, expressed in epidermal and cortical root cells.

Its subcellular location is the nucleus. Its function is as follows. Transcriptional regulator essential for Nod-factor-induced gene expression. Acts downstream of calcium spiking. May be a target of DMI3, a calcium/calmodulin-dependent protein kinase (CCaMK). Is essential for Nod factor-elicited expression of ERN1. Transcription factor involved in the control of strigolactone biosynthesis in roots through the activation of the beta-carotene isomerase D27, which participates in a pathway leading to biosynthesis of strigolactones. In Medicago truncatula (Barrel medic), this protein is Protein NODULATION SIGNALING PATHWAY 1.